The following is a 498-amino-acid chain: Protein disulfide-isomerase (498 aa).

The signal sequence occupies residues 1-23 (MASFRGSIWYCIFVLSLIAVAIS). Thioredoxin domains are found at residues 24 to 143 (AAES…KQSG) and 339 to 484 (YLKA…KNRD). Asparagine 41 carries N-linked (GlcNAc...) asparagine glycosylation. Active-site nucleophile residues include cysteine 61, cysteine 64, cysteine 406, and cysteine 409. 2 disulfide bridges follow: cysteine 61/cysteine 64 and cysteine 406/cysteine 409. The Prevents secretion from ER motif lies at 495–498 (KDEL).

This sequence belongs to the protein disulfide isomerase family.

Its subcellular location is the endoplasmic reticulum lumen. It carries out the reaction Catalyzes the rearrangement of -S-S- bonds in proteins.. Its function is as follows. Participates in the folding of proteins containing disulfide bonds, may be involved in glycosylation, prolyl hydroxylation and triglyceride transfer. In Ricinus communis (Castor bean), this protein is Protein disulfide-isomerase.